Consider the following 142-residue polypeptide: Large ribosomal subunit protein uL13 (142 aa).

It belongs to the universal ribosomal protein uL13 family. Part of the 50S ribosomal subunit.

In terms of biological role, this protein is one of the early assembly proteins of the 50S ribosomal subunit, although it is not seen to bind rRNA by itself. It is important during the early stages of 50S assembly. This is Large ribosomal subunit protein uL13 from Hahella chejuensis (strain KCTC 2396).